Here is a 1011-residue protein sequence, read N- to C-terminus: Cell division cycle-associated protein 2 (1011 aa).

The span at 1–22 (MDTCSQESEPLQTKESPINNAG) shows a compositional bias: polar residues. A disordered region spans residues 1 to 26 (MDTCSQESEPLQTKESPINNAGKTPL). Residues Ser125, Ser130, Ser209, Ser293, and Ser310 each carry the phosphoserine modification. Thr313 is subject to Phosphothreonine. The PP1-binding domain occupies 380 to 440 (KRKRVTFGED…PEWLPQPNFD (61 aa)). Phosphoserine is present on residues Ser391 and Ser398. Disordered stretches follow at residues 395 to 438 (LDES…PQPN) and 522 to 544 (PCKE…KVLP). Thr403 is subject to Phosphothreonine. A compositionally biased stretch (low complexity) spans 418-431 (SSLSPPLLEQSPVP). Residue Ser428 is modified to Phosphoserine. A compositionally biased stretch (basic and acidic residues) spans 522 to 543 (PCKEKKTNRRKSQESKHADKVL). Residues Ser583, Ser702, and Ser747 each carry the phosphoserine modification. Lys753 is covalently cross-linked (Glycyl lysine isopeptide (Lys-Gly) (interchain with G-Cter in SUMO2)). A compositionally biased stretch (basic and acidic residues) spans 790 to 803 (DQRKVSKSQGEDLG). Disordered stretches follow at residues 790–835 (DQRK…GLHL) and 896–1011 (GLVW…LSEN). Residues 931 to 945 (SSRQDPCTLPSTSSE) show a composition bias toward polar residues. The residue at position 967 (Ser967) is a Phosphoserine. A compositionally biased stretch (polar residues) spans 968–983 (FCTSTLANPKSTTQSR). Residues 993-1011 (QKRENTLQETSRESDLSEN) are compositionally biased toward basic and acidic residues.

In terms of assembly, interacts with PPP1CC. Post-translationally, phosphorylated by CDK1. May regulate its subcellular location.

The protein localises to the nucleus. Regulator of chromosome structure during mitosis required for condensin-depleted chromosomes to retain their compact architecture through anaphase. Acts by mediating the recruitment of phopsphatase PP1-gamma subunit (PPP1CC) to chromatin at anaphase and into the following interphase. At anaphase onset, its association with chromatin targets a pool of PPP1CC to dephosphorylate substrates. This Bos taurus (Bovine) protein is Cell division cycle-associated protein 2 (CDCA2).